Consider the following 158-residue polypeptide: C-type lectin (158 aa).

An N-terminal signal peptide occupies residues 1–23 (MGHFTFISLCLMPIFLSLSGAEC). 4 disulfides stabilise this stretch: Cys-26–Cys-37, Cys-54–Cys-154, Cys-61–Cys-156, and Cys-129–Cys-146. The C-type lectin domain occupies 33-155 (RNGLCYKLFD…CESLFAFICR (123 aa)). 2 N-linked (GlcNAc...) asparagine glycosylation sites follow: Asn-111 and Asn-121. Residues 119–121 (EPN) carry the Mannose-binding motif. Residues Glu-127, Asn-142, and Asp-143 each coordinate Ca(2+).

This sequence belongs to the true venom lectin family. As to quaternary structure, homodimer; non-covalently linked. As to expression, expressed by the venom gland.

Its subcellular location is the secreted. Functionally, mannose-binding lectin which recognizes specific carbohydrate structures and agglutinates a variety of animal cells by binding to cell-surface glycoproteins and glycolipids. May be a calcium-dependent lectin. The sequence is that of C-type lectin from Micrurus corallinus (Brazilian coral snake).